The primary structure comprises 445 residues: Tubulin beta-2 chain (445 aa).

The MREI motif signature appears at 1–4 (MREI). 8 residues coordinate GTP: Q11, E69, S138, G142, T143, G144, N204, and N226. Mg(2+) is bound at residue E69. The interval 424 to 445 (QYQDATADEQGEFEEEGEEDEA) is disordered. Residues 429–445 (TADEQGEFEEEGEEDEA) are compositionally biased toward acidic residues. E438 carries the post-translational modification 5-glutamyl polyglutamate.

It belongs to the tubulin family. As to quaternary structure, dimer of alpha and beta chains. A typical microtubule is a hollow water-filled tube with an outer diameter of 25 nm and an inner diameter of 15 nM. Alpha-beta heterodimers associate head-to-tail to form protofilaments running lengthwise along the microtubule wall with the beta-tubulin subunit facing the microtubule plus end conferring a structural polarity. Microtubules usually have 13 protofilaments but different protofilament numbers can be found in some organisms and specialized cells. Mg(2+) serves as cofactor. In terms of processing, some glutamate residues at the C-terminus are polyglycylated, resulting in polyglycine chains on the gamma-carboxyl group. Glycylation is mainly limited to tubulin incorporated into axonemes (cilia and flagella) whereas glutamylation is prevalent in neuronal cells, centrioles, axonemes, and the mitotic spindle. Both modifications can coexist on the same protein on adjacent residues, and lowering polyglycylation levels increases polyglutamylation, and reciprocally. The precise function of polyglycylation is still unclear. Some glutamate residues at the C-terminus are polyglutamylated, resulting in polyglutamate chains on the gamma-carboxyl group. Polyglutamylation plays a key role in microtubule severing by spastin (SPAST). SPAST preferentially recognizes and acts on microtubules decorated with short polyglutamate tails: severing activity by SPAST increases as the number of glutamates per tubulin rises from one to eight, but decreases beyond this glutamylation threshold. In terms of tissue distribution, highly expressed in neuronal cells.

The protein resides in the cytoplasm. Its subcellular location is the cytoskeleton. Its function is as follows. Tubulin is the major constituent of microtubules, a cylinder consisting of laterally associated linear protofilaments composed of alpha- and beta-tubulin heterodimers. Microtubules grow by the addition of GTP-tubulin dimers to the microtubule end, where a stabilizing cap forms. Below the cap, tubulin dimers are in GDP-bound state, owing to GTPase activity of alpha-tubulin. This is Tubulin beta-2 chain from Gallus gallus (Chicken).